The chain runs to 481 residues: Glutamyl-tRNA(Gln) amidotransferase subunit A (481 aa).

Residues Lys-74 and Ser-149 each act as charge relay system in the active site. Residue Ser-173 is the Acyl-ester intermediate of the active site.

It belongs to the amidase family. GatA subfamily. In terms of assembly, heterotrimer of A, B and C subunits.

It catalyses the reaction L-glutamyl-tRNA(Gln) + L-glutamine + ATP + H2O = L-glutaminyl-tRNA(Gln) + L-glutamate + ADP + phosphate + H(+). In terms of biological role, allows the formation of correctly charged Gln-tRNA(Gln) through the transamidation of misacylated Glu-tRNA(Gln) in organisms which lack glutaminyl-tRNA synthetase. The reaction takes place in the presence of glutamine and ATP through an activated gamma-phospho-Glu-tRNA(Gln). The sequence is that of Glutamyl-tRNA(Gln) amidotransferase subunit A from Francisella tularensis subsp. tularensis (strain FSC 198).